The primary structure comprises 368 residues: 3-isopropylmalate dehydrogenase (368 aa).

80–93 (GPKWDNLEFSKKPE) provides a ligand contact to NAD(+). Positions 100, 110, 138, and 229 each coordinate substrate. Residues D229, D253, and D257 each coordinate Mg(2+). Residue 292–304 (GSAPDIAGKEIAN) coordinates NAD(+).

It belongs to the isocitrate and isopropylmalate dehydrogenases family. LeuB type 1 subfamily. As to quaternary structure, homodimer. The cofactor is Mg(2+). Requires Mn(2+) as cofactor.

The protein localises to the cytoplasm. It carries out the reaction (2R,3S)-3-isopropylmalate + NAD(+) = 4-methyl-2-oxopentanoate + CO2 + NADH. It functions in the pathway amino-acid biosynthesis; L-leucine biosynthesis; L-leucine from 3-methyl-2-oxobutanoate: step 3/4. Catalyzes the oxidation of 3-carboxy-2-hydroxy-4-methylpentanoate (3-isopropylmalate) to 3-carboxy-4-methyl-2-oxopentanoate. The product decarboxylates to 4-methyl-2 oxopentanoate. This is 3-isopropylmalate dehydrogenase from Pelagibacter ubique (strain HTCC1062).